A 321-amino-acid polypeptide reads, in one-letter code: Auxin-responsive protein IAA8 (321 aa).

Residues Leu-54–Leu-58 carry the EAR-like (transcriptional repression) motif. The PB1 domain maps to Val-199–Gly-301.

Belongs to the Aux/IAA family. In terms of assembly, homodimers and heterodimers. Interacts with TPL. As to expression, highly expressed in the whole plant.

The protein resides in the nucleus. In terms of biological role, aux/IAA proteins are short-lived transcriptional factors that function as repressors of early auxin response genes at low auxin concentrations. Repression is thought to result from the interaction with auxin response factors (ARFs), proteins that bind to the auxin-responsive promoter element (AuxRE). Formation of heterodimers with ARF proteins may alter their ability to modulate early auxin response genes expression. This chain is Auxin-responsive protein IAA8 (IAA8), found in Arabidopsis thaliana (Mouse-ear cress).